Consider the following 271-residue polypeptide: Aquaporin-2 (271 aa).

The Cytoplasmic portion of the chain corresponds to 1-11; sequence MWELRSIAFSR. Residues 12 to 32 traverse the membrane as a helical segment; it reads AVLAEFLATLLFVFFGLGSAL. The Extracellular portion of the chain corresponds to 33-40; the sequence is NWPQALPS. The helical transmembrane segment at 41–59 threads the bilayer; the sequence is VLQIAMAFGLAIGTLVQAL. At 60 to 64 the chain is on the cytoplasmic side; sequence GHVSG. Positions 65-74 form an intramembrane region, discontinuously helical; the sequence is AHINPAVTVA. The short motif at 68–70 is the NPA 1 element; that stretch reads NPA. The Cytoplasmic portion of the chain corresponds to 75–85; sequence CLVGCHVSFLR. A helical membrane pass occupies residues 86 to 107; it reads AVFYVAAQLLGAVAGAALLHEI. The Extracellular portion of the chain corresponds to 108-127; that stretch reads TPPAIRGDLAVNALNNNSTA. N-linked (GlcNAc...) asparagine glycosylation is present at N123. A helical membrane pass occupies residues 128–148; it reads GQAVTVELFLTLQLVLCIFAS. Topologically, residues 149 to 156 are cytoplasmic; it reads TDERRGDN. A helical transmembrane segment spans residues 157–176; it reads VGTPALSIGFSVALGHLLGI. The Extracellular portion of the chain corresponds to 177-180; that stretch reads HYTG. Positions 181 to 193 form an intramembrane region, discontinuously helical; that stretch reads CSMNPARSLAPAI. The NPA 2 signature appears at 184-186; the sequence is NPA. Over 194-201 the chain is Extracellular; it reads VTGKFDDH. A helical transmembrane segment spans residues 202–222; sequence WVFWIGPLVGAIVASLLYNYV. Topologically, residues 223 to 271 are cytoplasmic; sequence LFPPAKSLSERLAVLKGLEPDTDWEEREVRRRQSVELHSPQSLPRGSKA. The tract at residues 251–271 is disordered; that stretch reads VRRRQSVELHSPQSLPRGSKA. A Phosphoserine modification is found at S256. The segment covering 261–271 has biased composition (polar residues); it reads SPQSLPRGSKA.

It belongs to the MIP/aquaporin (TC 1.A.8) family. Homotetramer. Post-translationally, ser-256 phosphorylation is necessary and sufficient for expression at the apical membrane. Endocytosis is not phosphorylation-dependent. In terms of processing, N-glycosylated.

Its subcellular location is the apical cell membrane. It is found in the basolateral cell membrane. It localises to the cell membrane. The protein resides in the cytoplasmic vesicle membrane. The protein localises to the golgi apparatus. Its subcellular location is the trans-Golgi network membrane. The enzyme catalyses H2O(in) = H2O(out). It catalyses the reaction glycerol(in) = glycerol(out). Its function is as follows. Forms a water-specific channel that provides the plasma membranes of renal collecting duct with high permeability to water, thereby permitting water to move in the direction of an osmotic gradient. Could also be permeable to glycerol. This is Aquaporin-2 from Bos taurus (Bovine).